The sequence spans 207 residues: Ribosomal RNA large subunit methyltransferase E (207 aa).

The S-adenosyl-L-methionine site is built by Gly49, Trp51, Asp69, Asp87, and Asp111. The active-site Proton acceptor is Lys151.

Belongs to the class I-like SAM-binding methyltransferase superfamily. RNA methyltransferase RlmE family.

The protein localises to the cytoplasm. It carries out the reaction uridine(2552) in 23S rRNA + S-adenosyl-L-methionine = 2'-O-methyluridine(2552) in 23S rRNA + S-adenosyl-L-homocysteine + H(+). Functionally, specifically methylates the uridine in position 2552 of 23S rRNA at the 2'-O position of the ribose in the fully assembled 50S ribosomal subunit. This chain is Ribosomal RNA large subunit methyltransferase E, found in Oleidesulfovibrio alaskensis (strain ATCC BAA-1058 / DSM 17464 / G20) (Desulfovibrio alaskensis).